Reading from the N-terminus, the 436-residue chain is UPF0229 protein mll9637 (436 aa).

Residues 54 to 103 are disordered; that stretch reads IPRKGTGEPTFGDDKESGRRQHILPGNRTFSSGDLIPKPGGGGGYGSAAG.

The protein belongs to the UPF0229 family.

This chain is UPF0229 protein mll9637, found in Mesorhizobium japonicum (strain LMG 29417 / CECT 9101 / MAFF 303099) (Mesorhizobium loti (strain MAFF 303099)).